The primary structure comprises 125 residues: Neuraminyllactose-binding hemagglutinin (125 aa).

An N-acetyl-neuraminyl-alpha(2,3)-lactose binding motif region spans residues 92 to 97 (KRTTQK).

The protein localises to the cell outer membrane. The sequence is that of Neuraminyllactose-binding hemagglutinin (hpaA) from Helicobacter acinonychis (Helicobacter acinonyx).